Here is a 680-residue protein sequence, read N- to C-terminus: MMKRQLHRMRQLAHTGSSGRTPETAEFLGEDLLQVEQRLEPAKRAAHNVHKRLQACLQGQSGADMDKRVKKLPLMALSTTMAESFKELDPDSSMGKALEMTCAIQNQLARILAEFEMTLERDVLQPLSRLSEEELPAILKHKKSLQKLVSDWNTLKSRLSQAAKNSGSNQGLGGASGSHTHTTTANKVEMLKEEEEELKKKVEQCKDEYLADLYHFSTKEDSYANYFIHLLEIQADYHRKSLTSLDTALAELRDNHSQADHSPLTTAAPFSRVYGVSLRTHLQDLGRDIALPIEACVLLLLSEGMQEEGLFRLAAGASVLKRLKQTMASDPHSLEEFCSDPHAVAGALKSYLRELPEPLMTSDLYDDWMRAASLKEPGARLEALHDVCSRLPQENFNNLRYLMKFLALLAEEQDVNKMTPSNIAIVLGPNLLWPPEKEGDQAQLDAASVSSIQVVGVVEALIQNADTLFPGDINFNVSGIFPGLAPQEKVSSQQVSEELPPVTVPAPATTPAPTPAPASMAVRERTEADLPKPTSPKVSRNPTETAASAEDMTRKTKRPAPARPTMPPPQPSSTRSSPPAPSLPPGSVSPGTPQALPRRLVGTSLRAPTMPPPLPPVPPQPARRQSRRLPASPVISNMPAQVDQGVATEDRGGPEAVGGHPPPPALPPQPRPRGLISETE.

The segment covering 1–11 (MMKRQLHRMRQ) has biased composition (basic residues). Disordered stretches follow at residues 1-24 (MMKR…TPET) and 160-184 (SQAA…HTTT). The interaction with CGNL1 stretch occupies residues 1-275 (MMKRQLHRMR…TAAPFSRVYG (275 aa)). The BAR domain occupies 81–262 (MAESFKELDP…RDNHSQADHS (182 aa)). The segment covering 160–169 (SQAAKNSGSN) has biased composition (polar residues). Ser-241 and Ser-262 each carry phosphoserine. In terms of domain architecture, Rho-GAP spans 276–469 (VSLRTHLQDL…ALIQNADTLF (194 aa)). Positions 470–680 (PGDINFNVSG…RPRGLISETE (211 aa)) are interaction with CD2AP. Residues 488–680 (EKVSSQQVSE…RPRGLISETE (193 aa)) are disordered. Over residues 502–516 (VTVPAPATTPAPTPA) the composition is skewed to pro residues. Ser-535 is modified (phosphoserine). Residues 536–546 (PKVSRNPTETA) are compositionally biased toward polar residues. Residues 561-571 (PARPTMPPPQP) show a composition bias toward pro residues. Ser-582 carries the phosphoserine modification. Residue Thr-592 is modified to Phosphothreonine. Residues 607–616 (APTMPPPLPP) carry the SH3-binding motif. The segment covering 609 to 621 (TMPPPLPPVPPQP) has biased composition (pro residues). Ser-632 bears the Phosphoserine mark. Residues 660–671 (HPPPPALPPQPR) show a composition bias toward pro residues.

In terms of assembly, interacts with RAC1. Interacts with the exocyst via EXOC4 and EXOC8; required for the localization of both SH3BP1 and the exocyst to the leading edge of migrating cells. Interacts with CD2AP and CGNL1; probably part of a complex at cell junctions. Interacts with CAPZA1; recruits CAPZA1 to forming cell junctions. May interact with AFDN. Interacts with PLXND1; they dissociate upon SEMA3E binding to PLXND1 allowing SH3BP1 to transduce downstream signal through RAC1 inactivation. Interacts with ABL1, GRB2 and SRC (via SH3 domain). Expressed in all tissues examined. Highest levels found in spleen and brain, lowest in heart and liver.

It localises to the cell projection. It is found in the cell junction. The protein localises to the tight junction. The protein resides in the adherens junction. Its subcellular location is the phagocytic cup. It localises to the nucleus. It is found in the cytoplasm. The protein localises to the cytosol. GTPase activating protein (GAP) which specifically converts GTP-bound Rho-type GTPases including RAC1 and CDC42 in their inactive GDP-bound form. By specifically inactivating RAC1 at the leading edge of migrating cells, it regulates the spatiotemporal organization of cell protrusions which is important for proper cell migration. Also negatively regulates CDC42 in the process of actin remodeling and the formation of epithelial cell junctions. Through its GAP activity toward RAC1 and/or CDC42 plays a specific role in phagocytosis of large particles. Specifically recruited by a PI3 kinase/PI3K-dependent mechanism to sites of large particles engagement, inactivates RAC1 and/or CDC42 allowing the reorganization of the underlying actin cytoskeleton required for engulfment. It also plays a role in angiogenesis and the process of repulsive guidance as part of a semaphorin-plexin signaling pathway. Following the binding of PLXND1 to extracellular SEMA3E it dissociates from PLXND1 and inactivates RAC1, inducing the intracellular reorganization of the actin cytoskeleton and the collapse of cells. This is SH3 domain-binding protein 1 from Mus musculus (Mouse).